A 409-amino-acid polypeptide reads, in one-letter code: MASSDTERDGGSPEKHSPVTDKHLEHSDLAKSPRGLKHYSKSRSRSREHKRKTDECRKHRSRSRSKEARRHEVKEKSSKKHRPDDSIDRDHSDKVRERLNSSENGEERHRRKEKRSSRGRSYSKSRSRERRHRSRSHDRRKSRSRSKERKRRPRSRSRSRSKHRHRSKSRSRSREKKKRIEKPRRHSRSRSRTPPSPPAFRGRNTAMDAQEALARRLERAKKLQEQREKEMADKQKQQETVAVAAAGGGSVINVAALLASGTQVTPQIAMAAQMAALQAKALAETGISVPSYYNPAAVNPMRFAEQEKKRKMLWQGKKEGDKSQSAEIWEKLNFGNKDQNVKFRKLMGIKNEEEAATSSVDVESFKTLKQQEEVFRNLDAQYEMARSQTHTQRGMGLGFTSSMRGMDTV.

Positions 1-31 (MASSDTERDGGSPEKHSPVTDKHLEHSDLAK) are enriched in basic and acidic residues. The segment at 1-204 (MASSDTERDG…PSPPAFRGRN (204 aa)) is disordered. Basic residues predominate over residues 34–50 (RGLKHYSKSRSRSREHK). Residues 64 to 108 (RSKEARRHEVKEKSSKKHRPDDSIDRDHSDKVRERLNSSENGEER) show a composition bias toward basic and acidic residues. Over residues 109–191 (HRRKEKRSSR…KPRRHSRSRS (83 aa)) the composition is skewed to basic residues. A coiled-coil region spans residues 204-244 (NTAMDAQEALARRLERAKKLQEQREKEMADKQKQQETVAVA).

It belongs to the RSRC2 family.

In Xenopus tropicalis (Western clawed frog), this protein is Arginine/serine-rich coiled-coil protein 2 (rsrc2).